The following is a 614-amino-acid chain: 1-deoxy-D-xylulose-5-phosphate synthase (614 aa).

Thiamine diphosphate is bound by residues histidine 76 and glycine 117–serine 119. Aspartate 148 is a Mg(2+) binding site. Thiamine diphosphate is bound by residues glycine 149–alanine 150, asparagine 177, tyrosine 285, and glutamate 366. Asparagine 177 is a binding site for Mg(2+).

Belongs to the transketolase family. DXPS subfamily. In terms of assembly, homodimer. Mg(2+) serves as cofactor. Thiamine diphosphate is required as a cofactor.

It carries out the reaction D-glyceraldehyde 3-phosphate + pyruvate + H(+) = 1-deoxy-D-xylulose 5-phosphate + CO2. Its pathway is metabolic intermediate biosynthesis; 1-deoxy-D-xylulose 5-phosphate biosynthesis; 1-deoxy-D-xylulose 5-phosphate from D-glyceraldehyde 3-phosphate and pyruvate: step 1/1. In terms of biological role, catalyzes the acyloin condensation reaction between C atoms 2 and 3 of pyruvate and glyceraldehyde 3-phosphate to yield 1-deoxy-D-xylulose-5-phosphate (DXP). This Pasteurella multocida (strain Pm70) protein is 1-deoxy-D-xylulose-5-phosphate synthase.